Reading from the N-terminus, the 619-residue chain is DNA mismatch repair protein MutL (619 aa).

It belongs to the DNA mismatch repair MutL/HexB family.

Its function is as follows. This protein is involved in the repair of mismatches in DNA. It is required for dam-dependent methyl-directed DNA mismatch repair. May act as a 'molecular matchmaker', a protein that promotes the formation of a stable complex between two or more DNA-binding proteins in an ATP-dependent manner without itself being part of a final effector complex. This Xylella fastidiosa (strain M23) protein is DNA mismatch repair protein MutL.